Consider the following 570-residue polypeptide: Hydroxylamine reductase (570 aa).

4 residues coordinate [4Fe-4S] cluster: cysteine 5, cysteine 8, cysteine 17, and cysteine 23. Hybrid [4Fe-2O-2S] cluster contacts are provided by histidine 266, glutamate 290, cysteine 334, cysteine 425, cysteine 453, cysteine 478, glutamate 513, and lysine 515. Cysteine 425 bears the Cysteine persulfide mark.

It belongs to the HCP family. Requires [4Fe-4S] cluster as cofactor. Hybrid [4Fe-2O-2S] cluster serves as cofactor.

Its subcellular location is the cytoplasm. The catalysed reaction is A + NH4(+) + H2O = hydroxylamine + AH2 + H(+). In terms of biological role, catalyzes the reduction of hydroxylamine to form NH(3) and H(2)O. The protein is Hydroxylamine reductase of Clostridium tetani (strain Massachusetts / E88).